The following is a 200-amino-acid chain: dTTP/UTP pyrophosphatase (200 aa).

The Proton acceptor role is filled by Asp-81.

This sequence belongs to the Maf family. YhdE subfamily. A divalent metal cation serves as cofactor.

The protein resides in the cytoplasm. The enzyme catalyses dTTP + H2O = dTMP + diphosphate + H(+). The catalysed reaction is UTP + H2O = UMP + diphosphate + H(+). Its function is as follows. Nucleoside triphosphate pyrophosphatase that hydrolyzes dTTP and UTP. May have a dual role in cell division arrest and in preventing the incorporation of modified nucleotides into cellular nucleic acids. This is dTTP/UTP pyrophosphatase from Cupriavidus pinatubonensis (strain JMP 134 / LMG 1197) (Cupriavidus necator (strain JMP 134)).